The primary structure comprises 253 residues: Uridylate kinase (253 aa).

26–29 is a binding site for ATP; the sequence is KLSG. UMP is bound at residue Gly-68. ATP is bound by residues Gly-69 and Arg-73. Residues Asp-88 and 149-156 contribute to the UMP site; that span reads TGNPFFTT. Residues Thr-176, Tyr-182, and Asp-185 each coordinate ATP.

The protein belongs to the UMP kinase family. In terms of assembly, homohexamer.

The protein localises to the cytoplasm. The catalysed reaction is UMP + ATP = UDP + ADP. Its pathway is pyrimidine metabolism; CTP biosynthesis via de novo pathway; UDP from UMP (UMPK route): step 1/1. Its activity is regulated as follows. Inhibited by UTP. Functionally, catalyzes the reversible phosphorylation of UMP to UDP. The sequence is that of Uridylate kinase from Chromohalobacter salexigens (strain ATCC BAA-138 / DSM 3043 / CIP 106854 / NCIMB 13768 / 1H11).